A 349-amino-acid polypeptide reads, in one-letter code: Histidinol-phosphate aminotransferase (349 aa).

The segment at 1-22 (MVSIRPSVRHTPAYVPGEQPQT) is disordered. Position 207 is an N6-(pyridoxal phosphate)lysine (lysine 207).

The protein belongs to the class-II pyridoxal-phosphate-dependent aminotransferase family. Histidinol-phosphate aminotransferase subfamily. As to quaternary structure, homodimer. Requires pyridoxal 5'-phosphate as cofactor.

The enzyme catalyses L-histidinol phosphate + 2-oxoglutarate = 3-(imidazol-4-yl)-2-oxopropyl phosphate + L-glutamate. Its pathway is amino-acid biosynthesis; L-histidine biosynthesis; L-histidine from 5-phospho-alpha-D-ribose 1-diphosphate: step 7/9. The protein is Histidinol-phosphate aminotransferase (hisC) of Synechocystis sp. (strain ATCC 27184 / PCC 6803 / Kazusa).